A 334-amino-acid chain; its full sequence is N-acetyl-gamma-glutamyl-phosphate reductase (334 aa).

Cys154 is a catalytic residue.

Belongs to the NAGSA dehydrogenase family. Type 1 subfamily.

Its subcellular location is the cytoplasm. The enzyme catalyses N-acetyl-L-glutamate 5-semialdehyde + phosphate + NADP(+) = N-acetyl-L-glutamyl 5-phosphate + NADPH + H(+). Its pathway is amino-acid biosynthesis; L-arginine biosynthesis; N(2)-acetyl-L-ornithine from L-glutamate: step 3/4. Catalyzes the NADPH-dependent reduction of N-acetyl-5-glutamyl phosphate to yield N-acetyl-L-glutamate 5-semialdehyde. The sequence is that of N-acetyl-gamma-glutamyl-phosphate reductase from Yersinia pestis.